Reading from the N-terminus, the 399-residue chain is Bombesin receptor subtype-3 (399 aa).

At 1 to 41 (MSQKQPQSPNQTLISITNDTESSSSVVSNDTTNKGWTGDNS) the chain is on the extracellular side. N-linked (GlcNAc...) asparagine glycosylation is found at Asn-10 and Asn-18. Residues 42–63 (PGIEALCAIYITYAVIISVGIL) form a helical membrane-spanning segment. Residues 64–82 (GNAILIKVFFKTKSMQTVP) lie on the Cytoplasmic side of the membrane. A helical membrane pass occupies residues 83 to 103 (NIFITSLALGDLLLLLTCVPV). At 104-121 (DATHYLAEGWLFGRIGCK) the chain is on the extracellular side. A disulfide bond links Cys-120 and Cys-203. A helical transmembrane segment spans residues 122-143 (VLSFIRLTSVGVSVFTLTILSA). Topologically, residues 144–163 (DRYKAVVKPLERQPSNAILK) are cytoplasmic. A helical transmembrane segment spans residues 164-184 (TCAKAGCIWIMSMIFALPEAI). Residues 185-220 (FSNVHTLRDPNKNMTSEWCAFYPVSEKLLQEIHALL) are Extracellular-facing. A helical membrane pass occupies residues 221-241 (SFLVFYIIPLSIISVYYSLIA). The Cytoplasmic segment spans residues 242–272 (RTLYKSTLNIPTEEQSHARKQVESRKRIAKT). A helical membrane pass occupies residues 273-293 (VLVLVALFALCWLPNHLLNLY). At 294–313 (HSFTHKAYEDSSAIHFIVTI) the chain is on the extracellular side. Residues 314-333 (FSRVLAFSNSCVNPFALYWL) form a helical membrane-spanning segment. Residues 334 to 399 (SKTFQKQFKA…RPMKKEENRV (66 aa)) lie on the Cytoplasmic side of the membrane. Cys-347 is lipidated: S-palmitoyl cysteine.

Belongs to the G-protein coupled receptor 1 family. As to quaternary structure, interacts with C6orf89. Mainly in uteri of pregnant animals.

The protein localises to the cell membrane. Functionally, role in sperm cell division, maturation, or function. The relative order of ligand affinity is GRP = neuromedin-C &gt;&gt; neuromedin-B. This receptor mediates its action by association with G proteins that activate a phosphatidylinositol-calcium second messenger system. The chain is Bombesin receptor subtype-3 (BRS3) from Cavia porcellus (Guinea pig).